The primary structure comprises 511 residues: Bifunctional purine biosynthesis protein PurH (511 aa).

The MGS-like domain occupies 1–145 (MKKRALVSVS…KNHKFVSVIV (145 aa)).

It belongs to the PurH family.

The enzyme catalyses (6R)-10-formyltetrahydrofolate + 5-amino-1-(5-phospho-beta-D-ribosyl)imidazole-4-carboxamide = 5-formamido-1-(5-phospho-D-ribosyl)imidazole-4-carboxamide + (6S)-5,6,7,8-tetrahydrofolate. It catalyses the reaction IMP + H2O = 5-formamido-1-(5-phospho-D-ribosyl)imidazole-4-carboxamide. It functions in the pathway purine metabolism; IMP biosynthesis via de novo pathway; 5-formamido-1-(5-phospho-D-ribosyl)imidazole-4-carboxamide from 5-amino-1-(5-phospho-D-ribosyl)imidazole-4-carboxamide (10-formyl THF route): step 1/1. The protein operates within purine metabolism; IMP biosynthesis via de novo pathway; IMP from 5-formamido-1-(5-phospho-D-ribosyl)imidazole-4-carboxamide: step 1/1. This chain is Bifunctional purine biosynthesis protein PurH, found in Bacillus mycoides (strain KBAB4) (Bacillus weihenstephanensis).